Reading from the N-terminus, the 294-residue chain is Cytidine deaminase (294 aa).

CMP/dCMP-type deaminase domains are found at residues 48-168 and 187-294; these read DDNT…FGPN and ETTD…YYTF. A substrate-binding site is contributed by 89 to 91; it reads NME. Histidine 102 contacts Zn(2+). Catalysis depends on glutamate 104, which acts as the Proton donor. Zn(2+) contacts are provided by cysteine 129 and cysteine 132.

Belongs to the cytidine and deoxycytidylate deaminase family. Homodimer. It depends on Zn(2+) as a cofactor.

It carries out the reaction cytidine + H2O + H(+) = uridine + NH4(+). It catalyses the reaction 2'-deoxycytidine + H2O + H(+) = 2'-deoxyuridine + NH4(+). In terms of biological role, this enzyme scavenges exogenous and endogenous cytidine and 2'-deoxycytidine for UMP synthesis. This Photorhabdus laumondii subsp. laumondii (strain DSM 15139 / CIP 105565 / TT01) (Photorhabdus luminescens subsp. laumondii) protein is Cytidine deaminase.